Here is a 156-residue protein sequence, read N- to C-terminus: Snaclec jerdonibitin subunit alpha (156 aa).

The N-terminal stretch at Met1–Ala23 is a signal peptide. Disulfide bonds link Cys25–Cys36, Cys53–Cys150, and Cys125–Cys142. The 120-residue stretch at Phe32–Lys151 folds into the C-type lectin domain.

Belongs to the snaclec family. In terms of assembly, heterodimer of subunits alpha and beta; disulfide-linked. Expressed by the venom gland.

Its subcellular location is the secreted. Snaclec that dose-dependently inhibits platelet aggregation induced by ristocetin or low-dose thrombin, but not by high-dose thrombin. Binds to GPIbalpha (GP1BA). In vivo, also dose-dependently induces thrombocytopenia of mice and platelet counts remains at very low level even after 18 hours intravenous injection. The polypeptide is Snaclec jerdonibitin subunit alpha (Protobothrops jerdonii (Jerdon's pitviper)).